Consider the following 358-residue polypeptide: Methylthioribose-1-phosphate isomerase (358 aa).

Position 1 is an N-acetylmethionine (Met-1). The Proton donor role is filled by Asp-248.

This sequence belongs to the eIF-2B alpha/beta/delta subunits family. MtnA subfamily.

It is found in the cytoplasm. The protein resides in the nucleus. It catalyses the reaction 5-(methylsulfanyl)-alpha-D-ribose 1-phosphate = 5-(methylsulfanyl)-D-ribulose 1-phosphate. Its pathway is amino-acid biosynthesis; L-methionine biosynthesis via salvage pathway; L-methionine from S-methyl-5-thio-alpha-D-ribose 1-phosphate: step 1/6. In terms of biological role, catalyzes the interconversion of methylthioribose-1-phosphate (MTR-1-P) into methylthioribulose-1-phosphate (MTRu-1-P). The sequence is that of Methylthioribose-1-phosphate isomerase from Bos taurus (Bovine).